The following is an 805-amino-acid chain: Muscarinic acetylcholine receptor DM1 (805 aa).

Topologically, residues 1–100 (MEPVMSLALA…GFETKGPRYS (100 aa)) are extracellular. Over residues 27–43 (TSTTTTTTTTTSTTTTT) the composition is skewed to low complexity. A disordered region spans residues 27 to 47 (TSTTTTTTTTTSTTTTTASPA). 3 N-linked (GlcNAc...) asparagine glycosylation sites follow: asparagine 65, asparagine 84, and asparagine 87. Residues 101-121 (LASMVVMGFVAAILSTVTVAG) form a helical membrane-spanning segment. The Cytoplasmic segment spans residues 122-141 (NVMVMISFKIDKQLQTISNY). The helical transmembrane segment at 142 to 162 (FLFSLAIADFAIGAISMPLFA) threads the bilayer. The Extracellular segment spans residues 163–177 (VTTILGYWPLGPIVC). The chain crosses the membrane as a helical span at residues 178 to 198 (DTWLALDYLASNASVLNLLII). At 199-220 (SFDRYFSVTRPLTYRAKRTTNR) the chain is on the cytoplasmic side. A helical transmembrane segment spans residues 221-241 (AAVMIGAAWGISLLLWPPWIY). The Extracellular portion of the chain corresponds to 242–266 (SWPYIEGKRTVPKDECYIQFIETNQ). The helical transmembrane segment at 267–287 (YITFGTALAAFYFPVTIMCFL) threads the bilayer. Residues 288 to 718 (YWRIWRETKK…KRQESKAAKT (431 aa)) lie on the Cytoplasmic side of the membrane. Disordered regions lie at residues 302 to 322 (LPNLQAGKKDSSKRSNSSDEN), 340 to 359 (GNDHDTWRRPRSESSPDAES), and 507 to 530 (GNGNGAINNNNNASHNGNGAVNGN). Composition is skewed to basic and acidic residues over residues 308-318 (GKKDSSKRSNS) and 341-353 (NDHDTWRRPRSES). A compositionally biased stretch (low complexity) spans 507 to 525 (GNGNGAINNNNNASHNGNG). Residues 719-739 (LSAILLSFIITWTPYNILVLI) form a helical membrane-spanning segment. At 740 to 752 (KPLTTCSDCIPTE) the chain is on the extracellular side. The chain crosses the membrane as a helical span at residues 753–773 (LWDFFYALCYINSTINPMCYA). Topologically, residues 774-805 (LCNATFRRTYVRILTCKWHTRNREGMVRGVYN) are cytoplasmic.

It belongs to the G-protein coupled receptor 1 family. Muscarinic acetylcholine receptor subfamily. As to expression, intense staining in the glomeruli of the antennal lobes, the region of the nervous system containing terminals of antennal olfactory sensory neurons and mechanosensory neurons. Also a discrete group of neurosecretory cells in the pars intercerebralis of the brain.

The protein resides in the cell membrane. It localises to the postsynaptic cell membrane. Its function is as follows. The muscarinic acetylcholine receptor mediates various cellular responses, including inhibition of adenylate cyclase, breakdown of phosphoinositides and modulation of potassium channels through the action of G proteins. Primary transducing effect is Pi turnover. May have a role in the processing of olfactory and mechanosensory signals; regulation of neurosecretion. This chain is Muscarinic acetylcholine receptor DM1 (mAChR-A), found in Drosophila melanogaster (Fruit fly).